Consider the following 597-residue polypeptide: Elongation factor 4 (597 aa).

The region spanning 2-184 (NNIRNFSIIA…ALIAKVPPPK (183 aa)) is the tr-type G domain. GTP-binding positions include 14–19 (DHGKST) and 131–134 (NKID).

Belongs to the TRAFAC class translation factor GTPase superfamily. Classic translation factor GTPase family. LepA subfamily.

The protein resides in the cell inner membrane. It carries out the reaction GTP + H2O = GDP + phosphate + H(+). Functionally, required for accurate and efficient protein synthesis under certain stress conditions. May act as a fidelity factor of the translation reaction, by catalyzing a one-codon backward translocation of tRNAs on improperly translocated ribosomes. Back-translocation proceeds from a post-translocation (POST) complex to a pre-translocation (PRE) complex, thus giving elongation factor G a second chance to translocate the tRNAs correctly. Binds to ribosomes in a GTP-dependent manner. The chain is Elongation factor 4 from Herminiimonas arsenicoxydans.